The sequence spans 247 residues: 2,3-bisphosphoglycerate-dependent phosphoglycerate mutase (247 aa).

Residues 8–15 (RHGESTWN), 21–22 (TG), Arg60, 87–90 (ERHY), Lys98, 114–115 (RR), and 183–184 (GN) contribute to the substrate site. His9 functions as the Tele-phosphohistidine intermediate in the catalytic mechanism. Catalysis depends on Glu87, which acts as the Proton donor/acceptor.

This sequence belongs to the phosphoglycerate mutase family. BPG-dependent PGAM subfamily. In terms of assembly, homodimer.

The enzyme catalyses (2R)-2-phosphoglycerate = (2R)-3-phosphoglycerate. It functions in the pathway carbohydrate degradation; glycolysis; pyruvate from D-glyceraldehyde 3-phosphate: step 3/5. Functionally, catalyzes the interconversion of 2-phosphoglycerate and 3-phosphoglycerate. This Delftia acidovorans (strain DSM 14801 / SPH-1) protein is 2,3-bisphosphoglycerate-dependent phosphoglycerate mutase.